Consider the following 124-residue polypeptide: Snake venom vascular endothelial growth factor toxin apiscin (124 aa).

Positions 1–24 (MAAYLLAVAILFCIQGWPSGTVQG) are cleaved as a signal peptide. Position 25 is a pyrrolidone carboxylic acid (Gln25). Disulfide bonds link Cys38-Cys80, Cys69-Cys115, and Cys73-Cys117.

Belongs to the PDGF/VEGF growth factor family. Snake venom VEGF subfamily. As to quaternary structure, homodimer; disulfide-linked. Interacts with VEGF receptor-1 (FLT1) with a high affinity, whereas it binds to VEGF receptor-2 (KDR) with a low affinity. Does not bind VEGF receptor-3 (FLT4). Expressed by the venom gland.

The protein localises to the secreted. Its function is as follows. Snake venom VEGFs that may contribute to venom dispersion and prey subjugation by inducing vascular permeability and hypotension. This protein induces an increase in capillary permeability after intradermal injection, as well as a drastic hypotensive effect after intravenous injection. The hypotension is mediated by nitric oxide (NO), which is produced by VEGF-activated endothelium NO synthase. Also induces angiogenesis in vitro. Like other crotalid VEGFs, this protein interacts with VEGF receptor-1 (FLT1) with a high affinity, whereas it binds to VEGF receptor-2 (KDR) with a low affinity. In Agkistrodon piscivorus piscivorus (Eastern cottonmouth), this protein is Snake venom vascular endothelial growth factor toxin apiscin.